The following is a 122-amino-acid chain: Large ribosomal subunit protein uL14 (122 aa).

Belongs to the universal ribosomal protein uL14 family. Part of the 50S ribosomal subunit. Forms a cluster with proteins L3 and L19. In the 70S ribosome, L14 and L19 interact and together make contacts with the 16S rRNA in bridges B5 and B8.

In terms of biological role, binds to 23S rRNA. Forms part of two intersubunit bridges in the 70S ribosome. This chain is Large ribosomal subunit protein uL14, found in Rhizobium meliloti (strain 1021) (Ensifer meliloti).